Here is a 371-residue protein sequence, read N- to C-terminus: Opsin, ultraviolet-sensitive (371 aa).

At 1–52 (MSNDSIHWEARYLPAGPPRLLGWNVPAEELIHIPEHWLVYPEPNPSLHYLLA) the chain is on the extracellular side. An N-linked (GlcNAc...) asparagine glycan is attached at Asn-3. Residues 53–73 (LLYILFTFLALLGNGLVIWIF) traverse the membrane as a helical segment. Topologically, residues 74–84 (CAAKSLRTPSN) are cytoplasmic. A helical membrane pass occupies residues 85–105 (MFVVNLAICDFFMMIKTPIFI). Topologically, residues 106 to 121 (YNSFNTGFALGNLGCQ) are extracellular. Cysteines 120 and 197 form a disulfide. The helical transmembrane segment at 122–142 (IFAVIGSLTGIGAAITNAAIA) threads the bilayer. The Cytoplasmic segment spans residues 143–161 (YDRYSTIARPLDGKLSRGQ). A helical membrane pass occupies residues 162-182 (VILFIVLIWTYTIPWALMPVM). Residues 183–209 (GVWGRFVPEGFLTSCSFDYLTDTNEIR) lie on the Extracellular side of the membrane. The helical transmembrane segment at 210 to 230 (IFVATIFTFSYCIPMILIIYY) threads the bilayer. Over 231 to 278 (YSQIVSHVVNHEKALREQAKKMNVDSLRSNANTSSQSAEIRIAKAAIT) the chain is Cytoplasmic. Residues 279-299 (ICFLYVLSWTPYGVMSMIGAF) form a helical membrane-spanning segment. At 300-302 (GNK) the chain is on the extracellular side. A helical membrane pass occupies residues 303–323 (ALLTPGVTMIPACTCKAVACL). Lys-318 carries the N6-(retinylidene)lysine modification. The Cytoplasmic portion of the chain corresponds to 324–371 (DPYVYAISHPKYRLELQKRLPWLELQEKPISDSTSTTTETVNTPPASS).

Belongs to the G-protein coupled receptor 1 family. Opsin subfamily. Phosphorylated on some or all of the serine and threonine residues present in the C-terminal region. Expressed in the dorsal region of the retina.

It is found in the membrane. Visual pigments are the light-absorbing molecules that mediate vision. They consist of an apoprotein, opsin, covalently linked to 11-cis-retinal. In Apis mellifera (Honeybee), this protein is Opsin, ultraviolet-sensitive (UVOP).